We begin with the raw amino-acid sequence, 406 residues long: Argininosuccinate synthase (406 aa).

ATP-binding positions include 11–19 (AYSGGLDTS) and alanine 38. L-citrulline is bound by residues tyrosine 91 and serine 96. Residue glycine 121 coordinates ATP. L-aspartate-binding residues include threonine 123, asparagine 127, and aspartate 128. Asparagine 127 contacts L-citrulline. Residues arginine 131, serine 181, serine 190, glutamate 266, and tyrosine 278 each coordinate L-citrulline.

This sequence belongs to the argininosuccinate synthase family. Type 1 subfamily. As to quaternary structure, homotetramer.

Its subcellular location is the cytoplasm. It catalyses the reaction L-citrulline + L-aspartate + ATP = 2-(N(omega)-L-arginino)succinate + AMP + diphosphate + H(+). It participates in amino-acid biosynthesis; L-arginine biosynthesis; L-arginine from L-ornithine and carbamoyl phosphate: step 2/3. This chain is Argininosuccinate synthase, found in Campylobacter jejuni subsp. jejuni serotype O:2 (strain ATCC 700819 / NCTC 11168).